The chain runs to 156 residues: Small ribosomal subunit protein uS7 (156 aa).

It belongs to the universal ribosomal protein uS7 family. Part of the 30S ribosomal subunit. Contacts proteins S9 and S11.

One of the primary rRNA binding proteins, it binds directly to 16S rRNA where it nucleates assembly of the head domain of the 30S subunit. Is located at the subunit interface close to the decoding center, probably blocks exit of the E-site tRNA. This chain is Small ribosomal subunit protein uS7, found in Colwellia psychrerythraea (strain 34H / ATCC BAA-681) (Vibrio psychroerythus).